The chain runs to 494 residues: Zinc finger and SCAN domain-containing protein 30 (494 aa).

The region spanning 48-130 (RQKFRQFSYS…TMLEELEKEL (83 aa)) is the SCAN box domain. A Glycyl lysine isopeptide (Lys-Gly) (interchain with G-Cter in SUMO2) cross-link involves residue lysine 197. C2H2-type zinc fingers lie at residues 301 to 323 (YECF…QRIH), 329 to 351 (YACK…QRIH), 357 to 379 (YECC…RRIH), 385 to 407 (YECG…KKIH), 413 to 435 (YECI…QRIH), 441 to 463 (YECN…QRIH), and 469 to 491 (YECS…QRTH).

It belongs to the krueppel C2H2-type zinc-finger protein family.

It localises to the nucleus. Its function is as follows. May be involved in transcriptional regulation. This chain is Zinc finger and SCAN domain-containing protein 30 (ZSCAN30), found in Homo sapiens (Human).